The primary structure comprises 420 residues: Histidine--tRNA ligase (420 aa).

It belongs to the class-II aminoacyl-tRNA synthetase family. As to quaternary structure, homodimer.

It is found in the cytoplasm. The enzyme catalyses tRNA(His) + L-histidine + ATP = L-histidyl-tRNA(His) + AMP + diphosphate + H(+). The protein is Histidine--tRNA ligase (hisS) of Thermotoga maritima (strain ATCC 43589 / DSM 3109 / JCM 10099 / NBRC 100826 / MSB8).